The primary structure comprises 956 residues: Pyruvate, phosphate dikinase, chloroplastic (956 aa).

Residues 1 to 79 (MMSSLFVEGM…AVLNPVSPPV (79 aa)) constitute a chloroplast transit peptide. Thr536 carries the post-translational modification Phosphothreonine; by PDRP1. His538 (tele-phosphohistidine intermediate) is an active-site residue. Positions 644, 701, 830, 851, 852, 853, and 854 each coordinate substrate. Glu830 is a binding site for Mg(2+). Asp854 contacts Mg(2+). The Proton donor role is filled by Cys916.

It belongs to the PEP-utilizing enzyme family. In terms of assembly, homotetramer. Mg(2+) serves as cofactor. Phosphorylation of Thr-536 in the dark inactivates the enzyme. Dephosphorylation upon light stimulation reactivates the enzyme.

Its subcellular location is the plastid. The protein localises to the chloroplast. It catalyses the reaction pyruvate + phosphate + ATP = phosphoenolpyruvate + AMP + diphosphate + H(+). With respect to regulation, activated by light-induced dephosphorylation. Inhibited by dark-induced phosphorylation. Both reactions are catalyzed by PDRP1. In terms of biological role, formation of phosphoenolpyruvate. This chain is Pyruvate, phosphate dikinase, chloroplastic (PPDK), found in Flaveria pringlei.